Here is a 424-residue protein sequence, read N- to C-terminus: Probable biofilm formation methyltransferase WspC (424 aa).

Positions 1 to 263 (MNEQRFFRFL…IAQSFAYVRH (263 aa)) constitute a CheR-type methyltransferase domain. Residues Thr-68, Arg-72, Glu-109, Asp-133, 187–188 (NV), and 206–207 (RN) each bind S-adenosyl-L-methionine. Residues 355 to 388 (AQVYYWLGLLSDTEGDAQQALSHYRKALYLEPQH) form a TPR repeat.

In terms of assembly, monomer. The TPR repeat does not mediate self-association.

In terms of biological role, involved in biofilm formation. This Pseudomonas putida (strain ATCC 47054 / DSM 6125 / CFBP 8728 / NCIMB 11950 / KT2440) protein is Probable biofilm formation methyltransferase WspC (wspC).